A 341-amino-acid polypeptide reads, in one-letter code: UDP-N-acetylenolpyruvoylglucosamine reductase (341 aa).

In terms of domain architecture, FAD-binding PCMH-type spans 15–185 (VTQSCLSLIE…TAVGLRLPKT (171 aa)). The active site involves Arg-161. Ser-231 acts as the Proton donor in catalysis. Residue Glu-327 is part of the active site.

It belongs to the MurB family. Requires FAD as cofactor.

Its subcellular location is the cytoplasm. It catalyses the reaction UDP-N-acetyl-alpha-D-muramate + NADP(+) = UDP-N-acetyl-3-O-(1-carboxyvinyl)-alpha-D-glucosamine + NADPH + H(+). The protein operates within cell wall biogenesis; peptidoglycan biosynthesis. Its function is as follows. Cell wall formation. This is UDP-N-acetylenolpyruvoylglucosamine reductase from Shewanella oneidensis (strain ATCC 700550 / JCM 31522 / CIP 106686 / LMG 19005 / NCIMB 14063 / MR-1).